The chain runs to 252 residues: 3-deoxy-manno-octulosonate cytidylyltransferase (252 aa).

Belongs to the KdsB family.

It is found in the cytoplasm. It carries out the reaction 3-deoxy-alpha-D-manno-oct-2-ulosonate + CTP = CMP-3-deoxy-beta-D-manno-octulosonate + diphosphate. It functions in the pathway nucleotide-sugar biosynthesis; CMP-3-deoxy-D-manno-octulosonate biosynthesis; CMP-3-deoxy-D-manno-octulosonate from 3-deoxy-D-manno-octulosonate and CTP: step 1/1. The protein operates within bacterial outer membrane biogenesis; lipopolysaccharide biosynthesis. In terms of biological role, activates KDO (a required 8-carbon sugar) for incorporation into bacterial lipopolysaccharide in Gram-negative bacteria. The protein is 3-deoxy-manno-octulosonate cytidylyltransferase of Thiobacillus denitrificans (strain ATCC 25259 / T1).